Here is a 37-residue protein sequence, read N- to C-terminus: Large ribosomal subunit protein bL36 (37 aa).

Belongs to the bacterial ribosomal protein bL36 family.

The polypeptide is Large ribosomal subunit protein bL36 (Beutenbergia cavernae (strain ATCC BAA-8 / DSM 12333 / CCUG 43141 / JCM 11478 / NBRC 16432 / NCIMB 13614 / HKI 0122)).